A 341-amino-acid polypeptide reads, in one-letter code: tRNA N6-adenosine threonylcarbamoyltransferase (341 aa).

Residues histidine 117 and histidine 121 each contribute to the Fe cation site. Substrate-binding positions include 139–143 (VVSGG), aspartate 172, glycine 185, aspartate 189, and asparagine 278. Aspartate 307 is a binding site for Fe cation.

The protein belongs to the KAE1 / TsaD family. The cofactor is Fe(2+).

The protein localises to the cytoplasm. It catalyses the reaction L-threonylcarbamoyladenylate + adenosine(37) in tRNA = N(6)-L-threonylcarbamoyladenosine(37) in tRNA + AMP + H(+). In terms of biological role, required for the formation of a threonylcarbamoyl group on adenosine at position 37 (t(6)A37) in tRNAs that read codons beginning with adenine. Is involved in the transfer of the threonylcarbamoyl moiety of threonylcarbamoyl-AMP (TC-AMP) to the N6 group of A37, together with TsaE and TsaB. TsaD likely plays a direct catalytic role in this reaction. This is tRNA N6-adenosine threonylcarbamoyltransferase from Bacillus licheniformis (strain ATCC 14580 / DSM 13 / JCM 2505 / CCUG 7422 / NBRC 12200 / NCIMB 9375 / NCTC 10341 / NRRL NRS-1264 / Gibson 46).